We begin with the raw amino-acid sequence, 99 residues long: Protein IDA-LIKE 3 (99 aa).

An N-terminal signal peptide occupies residues 1-32; it reads MSSRSHRSRKYQLTRTIPILVLLLVLLSCCNG. The segment covering 36–45 has biased composition (polar residues); the sequence is TNVFNTSSPP. 2 disordered regions span residues 36–58 and 73–99; these read TNVF…HDHV and SLPR…STKT. Residues 46–58 are compositionally biased toward basic and acidic residues; that stretch reads KQKDVVSPPHDHV.

Expressed in flowers and seedlings. Detected at the base of pedicel, in the floral abscission zone and in vascular tissues.

The protein localises to the secreted. Its subcellular location is the extracellular space. May be involved in floral abscission. The protein is Protein IDA-LIKE 3 (IDL3) of Arabidopsis thaliana (Mouse-ear cress).